The sequence spans 153 residues: Fimbrial protein EcpC (153 aa).

Residues 1–8 (MLKQVQKG) constitute a propeptide, leader sequence. Phe9 is subject to N-methylphenylalanine. The helical transmembrane segment at 9-29 (FTLIELMIVIAIIGILAAIAL) threads the bilayer. Cys130 and Cys143 are oxidised to a cystine.

Belongs to the N-Me-Phe pilin family.

It localises to the fimbrium. It is found in the membrane. This is Fimbrial protein EcpC (ecpC) from Eikenella corrodens.